The chain runs to 91 residues: Small ribosomal subunit protein uS17 (91 aa).

This sequence belongs to the universal ribosomal protein uS17 family. In terms of assembly, part of the 30S ribosomal subunit.

Its function is as follows. One of the primary rRNA binding proteins, it binds specifically to the 5'-end of 16S ribosomal RNA. The sequence is that of Small ribosomal subunit protein uS17 from Thermobifida fusca (strain YX).